A 154-amino-acid polypeptide reads, in one-letter code: 6,7-dimethyl-8-ribityllumazine synthase (154 aa).

5-amino-6-(D-ribitylamino)uracil-binding positions include Phe23, 57–59, and 81–83; these read AFE and AVI. A (2S)-2-hydroxy-3-oxobutyl phosphate-binding site is contributed by 86-87; it reads ST. The Proton donor role is filled by His89. Phe114 provides a ligand contact to 5-amino-6-(D-ribitylamino)uracil. Arg128 provides a ligand contact to (2S)-2-hydroxy-3-oxobutyl phosphate.

This sequence belongs to the DMRL synthase family.

It carries out the reaction (2S)-2-hydroxy-3-oxobutyl phosphate + 5-amino-6-(D-ribitylamino)uracil = 6,7-dimethyl-8-(1-D-ribityl)lumazine + phosphate + 2 H2O + H(+). It functions in the pathway cofactor biosynthesis; riboflavin biosynthesis; riboflavin from 2-hydroxy-3-oxobutyl phosphate and 5-amino-6-(D-ribitylamino)uracil: step 1/2. Catalyzes the formation of 6,7-dimethyl-8-ribityllumazine by condensation of 5-amino-6-(D-ribitylamino)uracil with 3,4-dihydroxy-2-butanone 4-phosphate. This is the penultimate step in the biosynthesis of riboflavin. This chain is 6,7-dimethyl-8-ribityllumazine synthase, found in Campylobacter jejuni subsp. doylei (strain ATCC BAA-1458 / RM4099 / 269.97).